The following is a 150-amino-acid chain: Large ribosomal subunit protein uL13 (150 aa).

The protein belongs to the universal ribosomal protein uL13 family. In terms of assembly, part of the 50S ribosomal subunit.

Its function is as follows. This protein is one of the early assembly proteins of the 50S ribosomal subunit, although it is not seen to bind rRNA by itself. It is important during the early stages of 50S assembly. The chain is Large ribosomal subunit protein uL13 from Chlamydia muridarum (strain MoPn / Nigg).